A 141-amino-acid polypeptide reads, in one-letter code: Lutropin subunit beta (141 aa).

The N-terminal stretch at Met-1–Ala-20 is a signal peptide. 6 cysteine pairs are disulfide-bonded: Cys-29/Cys-77, Cys-43/Cys-92, Cys-46/Cys-130, Cys-54/Cys-108, Cys-58/Cys-110, and Cys-113/Cys-120. N-linked (GlcNAc...) asparagine glycosylation is present at Asn-33.

The protein belongs to the glycoprotein hormones subunit beta family. As to quaternary structure, heterodimer of a common alpha chain and a unique beta chain which confers biological specificity to thyrotropin, lutropin, follitropin and gonadotropin.

The protein resides in the secreted. In terms of biological role, promotes spermatogenesis and ovulation by stimulating the testes and ovaries to synthesize steroids. The chain is Lutropin subunit beta (LHB) from Bos taurus (Bovine).